The sequence spans 152 residues: Transcriptional regulator MraZ (152 aa).

SpoVT-AbrB domains are found at residues 5–52 and 81–124; these read ASAI…PIHE and AHEV…DEQA.

It belongs to the MraZ family. In terms of assembly, forms oligomers.

The protein localises to the cytoplasm. Its subcellular location is the nucleoid. In Shewanella oneidensis (strain ATCC 700550 / JCM 31522 / CIP 106686 / LMG 19005 / NCIMB 14063 / MR-1), this protein is Transcriptional regulator MraZ.